The primary structure comprises 495 residues: Tripartite motif-containing protein 5 (495 aa).

N-acetylalanine is present on Ala2. The RING-type zinc finger occupies 15–60 (CPICLELLTEPLSLPCGHSFCQACITANHKKSMLYKEEERSCPVCR). A Phosphoserine modification is found at Ser87. Residues 92–133 (QKVDHCARHGEKLLLFCQEDRKVICWLCERSQEHRGHHTFLM) form a B box-type zinc finger. Cys97, His100, Cys119, and His125 together coordinate Zn(2+). A coiled-coil region spans residues 137-177 (AQEYHVKLQTALEMLRQKQQEAEKLEADIREEKASWKIQID). The tract at residues 187-200 (FEQLREILDWEESN) is required for interaction with GABARAP and for autophagy. The B30.2/SPRY domain occupies 283 to 495 (LKGMLDMFRE…VPMTLCSPSS (213 aa)).

Belongs to the TRIM/RBCC family. In terms of assembly, can form homodimers and homotrimers. In addition to lower-order dimerization, also exhibits a higher-order multimerization and both low- and high-order multimerizations are essential for its restriction activity. Interacts with BTBD1 and BTBD2. Interacts with PSMC4, PSMC5, PSMD7 and HSPA8/HSC70. Interacts (via B30.2/SPRY domain) with HSPA1A/B. Interacts with PSMC2, MAP3K7/TAK1, TAB2 and TAB3. Interacts with SQSTM1. Interacts with TRIM6 and TRIM34. Interacts with ULK1 (phosphorylated form), GABARAP, GABARAPL1, GABARAPL2, MAP1LC3A, MAP1LC3C and BECN1. Degraded in a proteasome-independent fashion in the absence of viral infection but in a proteasome-dependent fashion following exposure to restriction sensitive virus. In terms of processing, autoubiquitinated in a RING finger- and UBE2D2-dependent manner. Monoubiquitinated by TRIM21. Deubiquitinated by Yersinia YopJ. Ubiquitination may not lead to proteasomal degradation.

Its subcellular location is the cytoplasm. It localises to the nucleus. The catalysed reaction is S-ubiquitinyl-[E2 ubiquitin-conjugating enzyme]-L-cysteine + [acceptor protein]-L-lysine = [E2 ubiquitin-conjugating enzyme]-L-cysteine + N(6)-ubiquitinyl-[acceptor protein]-L-lysine.. Its pathway is protein modification; protein ubiquitination. Functionally, capsid-specific restriction factor that prevents infection from non-host-adapted retroviruses. Blocks viral replication early in the life cycle, after viral entry but before reverse transcription. In addition to acting as a capsid-specific restriction factor, also acts as a pattern recognition receptor that activates innate immune signaling in response to the retroviral capsid lattice. Binding to the viral capsid triggers its E3 ubiquitin ligase activity, and in concert with the heterodimeric ubiquitin conjugating enzyme complex UBE2V1-UBE2N (also known as UBC13-UEV1A complex) generates 'Lys-63'-linked polyubiquitin chains, which in turn are catalysts in the autophosphorylation of the MAP3K7/TAK1 complex (includes TAK1, TAB2, and TAB3). Activation of the MAP3K7/TAK1 complex by autophosphorylation results in the induction and expression of NF-kappa-B and MAPK-responsive inflammatory genes, thereby leading to an innate immune response in the infected cell. Plays a role in regulating autophagy through activation of autophagy regulator BECN1 by causing its dissociation from its inhibitors BCL2 and TAB2. This chain is Tripartite motif-containing protein 5 (TRIM5), found in Erythrocebus patas (Red guenon).